A 92-amino-acid chain; its full sequence is Small ribosomal subunit protein uS19 (92 aa).

The protein belongs to the universal ribosomal protein uS19 family.

In terms of biological role, protein S19 forms a complex with S13 that binds strongly to the 16S ribosomal RNA. This chain is Small ribosomal subunit protein uS19, found in Nitrobacter hamburgensis (strain DSM 10229 / NCIMB 13809 / X14).